A 443-amino-acid polypeptide reads, in one-letter code: Xaa-Pro dipeptidase (443 aa).

Mn(2+) is bound by residues aspartate 246, aspartate 257, histidine 339, glutamate 384, and glutamate 423.

The protein belongs to the peptidase M24B family. Bacterial-type prolidase subfamily. The cofactor is Mn(2+).

It carries out the reaction Xaa-L-Pro dipeptide + H2O = an L-alpha-amino acid + L-proline. Functionally, splits dipeptides with a prolyl residue in the C-terminal position. The chain is Xaa-Pro dipeptidase from Pectobacterium atrosepticum (strain SCRI 1043 / ATCC BAA-672) (Erwinia carotovora subsp. atroseptica).